The sequence spans 208 residues: Probable GTP-binding protein EngB (208 aa).

Residues 23–205 (LTSEMVILGR…RQTLLKYLLT (183 aa)) enclose the EngB-type G domain. Residues 31–38 (GRSNVGKS), 57–61 (GKTRL), 84–87 (DLPG), 154–157 (TKFD), and 182–184 (FNA) each bind GTP. Residues Ser38 and Thr59 each contribute to the Mg(2+) site.

It belongs to the TRAFAC class TrmE-Era-EngA-EngB-Septin-like GTPase superfamily. EngB GTPase family. Mg(2+) serves as cofactor.

Necessary for normal cell division and for the maintenance of normal septation. This Helicobacter pylori (strain J99 / ATCC 700824) (Campylobacter pylori J99) protein is Probable GTP-binding protein EngB.